A 225-amino-acid polypeptide reads, in one-letter code: Transcription factor HES-7 (225 aa).

The bHLH domain maps to 12–69 (GPKMLKPLVEKRRRDRINRSLEELRLLLLERTRDQNLRNPKLEKAEILEFAVGYLRER). The 31-residue stretch at 92 to 122 (YLSGFRECLLRLAAFAHDASPAARAQLFSAL) folds into the Orange domain. The tract at residues 125 to 225 (YLRPKPPRPK…PPPAFWRPWP (101 aa)) is disordered. Positions 147–158 (LDPAAPALGPAL) are enriched in low complexity. Over residues 212 to 225 (APLPPPPAFWRPWP) the composition is skewed to pro residues. The WRPW motif motif lies at 221–224 (WRPW).

As to quaternary structure, transcription repression requires formation of a complex with a corepressor protein of the Groucho/TLE family.

Its subcellular location is the nucleus. Functionally, transcriptional repressor. Represses transcription from both N box- and E box-containing promoters. May with HES1, cooperatively regulate somite formation in the presomitic mesoderm (PSM). May function as a segmentation clock, which is essential for coordinated somite segmentation. The chain is Transcription factor HES-7 (HES7) from Homo sapiens (Human).